We begin with the raw amino-acid sequence, 149 residues long: Large ribosomal subunit protein bL9 (149 aa).

This sequence belongs to the bacterial ribosomal protein bL9 family.

Its function is as follows. Binds to the 23S rRNA. This Salmonella dublin (strain CT_02021853) protein is Large ribosomal subunit protein bL9.